The following is a 235-amino-acid chain: Ion-translocating oxidoreductase complex subunit E (235 aa).

5 helical membrane passes run 63–83 (LGLS…ISLF), 93–113 (IPIY…LMNA), 117–137 (TLYQ…IIIG), 152–172 (IWDG…LGAL), and 206–226 (SFLL…LLAI).

The protein belongs to the NqrDE/RnfAE family. As to quaternary structure, the complex is composed of six subunits: RnfA, RnfB, RnfC, RnfD, RnfE and RnfG.

Its subcellular location is the cell inner membrane. In terms of biological role, part of a membrane-bound complex that couples electron transfer with translocation of ions across the membrane. The protein is Ion-translocating oxidoreductase complex subunit E of Haemophilus influenzae (strain PittEE).